We begin with the raw amino-acid sequence, 95 residues long: MNNSFNKEDRMSSDTMVGSCDRQTKNGAKWHGGVSSLLDFTLIYIQLSTSFQNAGHSFKKQHICSDFEVMDELSCAVYGNKFYYLLPTLTHPSIQ.

Over residues methionine 1–serine 12 the composition is skewed to basic and acidic residues. The disordered stretch occupies residues methionine 1–cysteine 20.

Could play a role in innate immunity against viruses. In Homo sapiens (Human), this protein is Putative protein RDUR.